We begin with the raw amino-acid sequence, 165 residues long: LOB domain-containing protein 3 (165 aa).

One can recognise an LOB domain in the interval 13 to 115 (SPCAGCKLLR…TQLAFAQAEL (103 aa)).

It belongs to the LOB domain-containing protein family. As to expression, expressed in young shoots, roots, stems, leaves and flowers. At the bases of lateral organs formed from vegetative, inflorescence, and floral meristems.

It is found in the nucleus. This Arabidopsis thaliana (Mouse-ear cress) protein is LOB domain-containing protein 3 (LBD3).